Here is a 160-residue protein sequence, read N- to C-terminus: Protein cornichon homolog 2 (160 aa).

Residues Met-1 to Tyr-10 are Cytoplasmic-facing. The helical transmembrane segment at Met-11 to Phe-31 threads the bilayer. The Lumenal portion of the chain corresponds to Asp-32–Tyr-72. Residues Cys-73–Leu-93 form a helical membrane-spanning segment. Residues Asn-94–Lys-138 lie on the Cytoplasmic side of the membrane. A helical membrane pass occupies residues Leu-139 to Ser-159. Phe-160 is a topological domain (lumenal).

This sequence belongs to the cornichon family. Interacts with HBEGF. In terms of tissue distribution, expressed in the odd-numbered neuromeres (r3 and r5) of the developing hindbrain.

The protein resides in the membrane. In terms of biological role, regulates the trafficking and gating properties of AMPA-selective glutamate receptors (AMPARs). Plays an important role in the proper development of cranial nerves by facilitating the secretion of HBEGF. This chain is Protein cornichon homolog 2 (CNIH2), found in Gallus gallus (Chicken).